Consider the following 1014-residue polypeptide: Valine--tRNA ligase (1014 aa).

The short motif at 49 to 59 (PNVTGSLHMGH) is the 'HIGH' region element. The short motif at 542 to 546 (KMSKS) is the 'KMSKS' region element. Lys545 contributes to the ATP binding site. The stretch at 947-1014 (VVDIETLRAK…ILRLRLQTLV (68 aa)) forms a coiled coil.

This sequence belongs to the class-I aminoacyl-tRNA synthetase family. ValS type 1 subfamily. In terms of assembly, monomer.

The protein localises to the cytoplasm. It catalyses the reaction tRNA(Val) + L-valine + ATP = L-valyl-tRNA(Val) + AMP + diphosphate. Its function is as follows. Catalyzes the attachment of valine to tRNA(Val). As ValRS can inadvertently accommodate and process structurally similar amino acids such as threonine, to avoid such errors, it has a 'posttransfer' editing activity that hydrolyzes mischarged Thr-tRNA(Val) in a tRNA-dependent manner. The chain is Valine--tRNA ligase from Nostoc sp. (strain PCC 7120 / SAG 25.82 / UTEX 2576).